A 605-amino-acid polypeptide reads, in one-letter code: MTSKPTTQKSVMYRIPSERTLESLHEMIGSRMSKMSLKNTLRGISNPYERDENEGSEDMIFELFKIPNKNEASIGKLLTVLRQLGLRDDDPRLVPMMEKIKDFEKIAEEKCSEATEQKHWKLTKEQFKECIAPSIDIVSRALQTDMVIPNWVTFVDQIRTLFNECKEIREGQVATYIPQLARQSPNLWAVSLCTVDGQRASFGDVKHPFCVQSVSKAFNYAIVASDLGADVVHSYVGQEPSGRLFNEICLDSTNKPHNPMVNSGAIVITSLIKSKTNMADRFDFVLNQYRKIAGNEFIGFNNATFLSERATADRNYALSYFMKENRCFPKETESLTDALDFYFQLCSVEVTCESLAVMASTLANGGVCPITNETCVDPNPCRDVLSLMYSCGMYDASGQFSFNVGLPAKSGVSGAMIVVVPNVMGICLFSPPLDSLGNSCRGVAFCKKLVSTFNFHNYDCLVHNSNIKSDPRRRDIRERDRLIPVFHVARAGDLPTMRRLYMQGEDLNTSDHDDRTVLHIAATEGYETMIKFLVNVAKVDVDKKDRWGRTPLDEAKFFKHDHVSRFLEKAMKRPEQHRKDSVSSLDTDDEIDDDGFPEKPSFTID.

7 residues coordinate substrate: Ser213, Asn262, Glu308, Asn315, Tyr342, Tyr394, and Val412. 2 ANK repeats span residues 480 to 509 (DRLI…DLNT) and 513 to 543 (DDRT…DVDK). A compositionally biased stretch (basic and acidic residues) spans 569 to 581 (KAMKRPEQHRKDS). The tract at residues 569–605 (KAMKRPEQHRKDSVSSLDTDDEIDDDGFPEKPSFTID) is disordered. The span at 586–595 (DTDDEIDDDG) shows a compositional bias: acidic residues.

The protein belongs to the glutaminase family.

The enzyme catalyses L-glutamine + H2O = L-glutamate + NH4(+). The polypeptide is Putative glutaminase 2 (glna-2) (Caenorhabditis elegans).